Reading from the N-terminus, the 1275-residue chain is Serine/threonine-protein kinase ULK4 (1275 aa).

The Protein kinase domain maps to 4-280 (FILYEEIGRG…WTRLLQHSFW (277 aa)). Disordered stretches follow at residues 299-350 (SRNT…KSTL) and 364-392 (RPTP…TSPL). Residues 336-348 (FRLENPTEFRPKS) show a composition bias toward basic and acidic residues. Residues 364 to 373 (RPTPRTSTAV) are compositionally biased toward polar residues. HEAT repeat units follow at residues 842 to 880 (LKLC…ILSH), 926 to 964 (STVV…LLVN), 1025 to 1063 (LVEE…NLVA), 1151 to 1189 (NRPL…LYGG), and 1213 to 1253 (PKEQ…LAPG).

The protein belongs to the protein kinase superfamily. Ser/Thr protein kinase family. APG1/unc-51/ULK1 subfamily. Expressed in the brain, mainly in postmitotic neurons, including GABAergic neurons, but not in astrocytes (at protein level).

The catalysed reaction is L-seryl-[protein] + ATP = O-phospho-L-seryl-[protein] + ADP + H(+). The enzyme catalyses L-threonyl-[protein] + ATP = O-phospho-L-threonyl-[protein] + ADP + H(+). Its function is as follows. May be involved in the remodeling of cytoskeletal components, such as alpha-tubulin, and in this way regulates neurite branching and elongation, as well as cell motility. This chain is Serine/threonine-protein kinase ULK4 (ULK4), found in Homo sapiens (Human).